A 101-amino-acid chain; its full sequence is AFA-III adhesin operon regulatory protein (101 aa).

Its function is as follows. Regulates the transcription of genes involved in the biosynthesis of afimbrial adhesin-III. This Escherichia coli protein is AFA-III adhesin operon regulatory protein (afaA).